Here is a 177-residue protein sequence, read N- to C-terminus: R-phycoerythrin beta chain (177 aa).

(2R,3E)-phycoerythrobilin is bound by residues N35 and D39. Phycourobilin contacts are provided by C50, D54, and C61. Residues N72, 77-78, C82, and 84-85 each bind (2R,3E)-phycoerythrobilin; these read RR and RD. An N4-methylasparagine modification is found at N72. 147–148 contacts phycourobilin; that stretch reads SQ. Residues I154 and C158 each coordinate (2R,3E)-phycoerythrobilin.

It belongs to the phycobiliprotein family. In terms of assembly, heterododecamer of 6 alpha and 6 beta chains. The basic functional unit of phycobiliproteins is a ring-shaped hexamer formed from two back-to-back trimers contacting via the alpha chain subunits. The trimers are composed of alpha/beta subunit heterodimers arranged around a three-fold axis of symmetry. The phycoerythrins also contain a gamma subunit which is located in the center of the hexamer. In terms of processing, contains two covalently linked phycoerythrobilin chromophores and one covalently linked phycourobilin chromophore.

The protein localises to the plastid. It is found in the chloroplast thylakoid membrane. Its function is as follows. Light-harvesting photosynthetic tetrapyrrole chromophore-protein from the phycobiliprotein complex. This Agarophyton chilense (Red seaweed) protein is R-phycoerythrin beta chain (rpeB).